A 341-amino-acid polypeptide reads, in one-letter code: S-adenosylmethionine:tRNA ribosyltransferase-isomerase (341 aa).

Belongs to the QueA family. Monomer.

Its subcellular location is the cytoplasm. It catalyses the reaction 7-aminomethyl-7-carbaguanosine(34) in tRNA + S-adenosyl-L-methionine = epoxyqueuosine(34) in tRNA + adenine + L-methionine + 2 H(+). Its pathway is tRNA modification; tRNA-queuosine biosynthesis. Functionally, transfers and isomerizes the ribose moiety from AdoMet to the 7-aminomethyl group of 7-deazaguanine (preQ1-tRNA) to give epoxyqueuosine (oQ-tRNA). The polypeptide is S-adenosylmethionine:tRNA ribosyltransferase-isomerase (Alkaliphilus metalliredigens (strain QYMF)).